Reading from the N-terminus, the 354-residue chain is Magnesium-protoporphyrin IX monomethyl ester [oxidative] cyclase (354 aa).

It belongs to the AcsF family. The cofactor is Fe cation.

The protein resides in the plastid. Its subcellular location is the chloroplast. It catalyses the reaction Mg-protoporphyrin IX 13-monomethyl ester + 3 NADPH + 3 O2 + 2 H(+) = 3,8-divinyl protochlorophyllide a + 3 NADP(+) + 5 H2O. Its pathway is porphyrin-containing compound metabolism; chlorophyll biosynthesis (light-independent). Functionally, catalyzes the formation of the isocyclic ring in chlorophyll biosynthesis. Mediates the cyclase reaction, which results in the formation of divinylprotochlorophyllide (Pchlide) characteristic of all chlorophylls from magnesium-protoporphyrin IX 13-monomethyl ester (MgPMME). This chain is Magnesium-protoporphyrin IX monomethyl ester [oxidative] cyclase, found in Cyanidium caldarium (Red alga).